The chain runs to 262 residues: MSTAEATREENVYMAKLAEQAERYEEMVEFMEKVAKTADVGELTVEERNLLSVAYKNVIGARRASWRIISSIEQKEESRGNEAYVASIKEYRTRIETELSKICDGILKLLDSHLVPSATAAESKVFYLKMKGDYHRYLAEFKAGAERKEAAENTLVAYKSAQDIALADLPTTHPIRLGLALNFSVFYYEILNSPDRACNLAKQAFDEAIAELDSLGEESYKDSTLIMQLLRDNLTLWTSDNAEEGGDEIKEAASKPEGEGHS.

A disordered region spans residues aspartate 240 to serine 262. The segment covering aspartate 247–serine 262 has biased composition (basic and acidic residues).

It belongs to the 14-3-3 family.

The sequence is that of 14-3-3-like protein A from Hordeum vulgare (Barley).